Reading from the N-terminus, the 321-residue chain is Fibronectin type III domain-containing protein 8 (321 aa).

In terms of domain architecture, Fibronectin type-III spans 175–277; it reads VPEAPFVCEH…KPYKFATVAT (103 aa).

The protein is Fibronectin type III domain-containing protein 8 (FNDC8) of Bos taurus (Bovine).